The following is a 242-amino-acid chain: UPF0246 protein SPN23F15130 (242 aa).

This sequence belongs to the UPF0246 family.

This is UPF0246 protein SPN23F15130 from Streptococcus pneumoniae (strain ATCC 700669 / Spain 23F-1).